Reading from the N-terminus, the 220-residue chain is Metalloproteinase inhibitor 2 (220 aa).

The signal sequence occupies residues 1 to 26; it reads MGAAARSLRLALGLLLLATLPRPADA. C27 contacts Zn(2+). Involved in metalloproteinase-binding stretches follow at residues 27-30 and 95-96; these read CSCS and SA. Intrachain disulfides connect C27-C98, C29-C127, C39-C152, C154-C201, C159-C164, and C172-C193. In terms of domain architecture, NTR spans 27–152; the sequence is CSCSPVHPQQ…SLNHRYQMGC (126 aa).

It belongs to the protease inhibitor I35 (TIMP) family. In terms of assembly, interacts (via the C-terminal) with MMP2 (via the C-terminal PEX domain); the interaction inhibits the MMP2 activity. Post-translationally, the activity of TIMP2 is dependent on the presence of disulfide bonds.

Its subcellular location is the secreted. Complexes with metalloproteinases (such as collagenases) and irreversibly inactivates them by binding to their catalytic zinc cofactor. The polypeptide is Metalloproteinase inhibitor 2 (TIMP2) (Canis lupus familiaris (Dog)).